Consider the following 410-residue polypeptide: uncharacterized protein (410 aa).

The next 11 membrane-spanning stretches (helical) occupy residues 14-34, 48-68, 82-102, 140-160, 164-184, 212-232, 251-271, 279-299, 303-323, 342-362, and 371-391; these read IIIG…FLAI, GLVI…GGYI, IFGW…WVFF, YAAI…FGSS, TPFL…ALQF, YLFT…SQFS, LYGL…FPIV, PLCS…IFTV, VPSI…LFSM, GAIG…GICI, and IYIF…LAFA.

Belongs to the major facilitator superfamily. TCR/Tet family.

The protein resides in the cell membrane. This is an uncharacterized protein from Bacillus subtilis (strain 168).